The sequence spans 229 residues: UPF0758 protein Cagg_0777 (229 aa).

Positions 105–227 (PIRSPGDVAA…YVSLRERGIG (123 aa)) constitute an MPN domain. Positions 176, 178, and 189 each coordinate Zn(2+). Residues 176-189 (HNHPSGEATPSPED) carry the JAMM motif motif.

It belongs to the UPF0758 family.

In Chloroflexus aggregans (strain MD-66 / DSM 9485), this protein is UPF0758 protein Cagg_0777.